The chain runs to 777 residues: Protein argonaute (777 aa).

Residues 1–107 (MAPVQAADEM…ARLDDALEEA (107 aa)) are N-terminal domain. Residues 108–182 (LPKYAAVKKR…TIGMRYDIEA (75 aa)) are linker L1. The segment at 183-243 (SLRDLLEAGI…VNVNDAKLEG (61 aa)) is PAZ domain. Residues 244 to 341 (SKENFTRCLS…DRTGAKSAEY (98 aa)) form a linker L2 region. Positions 342-509 (AWRGLSQFGP…SIATYAKLNG (168 aa)) are mid domain. Residues 445-757 (GIVVLFEDHA…IAELLGRLKS (313 aa)) enclose the Piwi domain. Residues 510–777 (TPWTVNHDKA…IKLKWSRWFL (268 aa)) are PIWI domain. Leucine 777 contacts Mg(2+).

It belongs to the argonaute family. Long pAgo subfamily. Requires Mg(2+) as cofactor.

Functionally, a catalytically inactive argonaute protein. Binds 5'-phosphorylated RNA as the guide (gRNA) and short DNA as target DNA (tDNA); does not bind other nucleic acid combinations, does not bind tDNA alone. Has highest affinity for gRNA that begins with 5'-phospho-U and poor affinity for gRNA with 5'-OH. Upon expression in E.coli, plasmid sequences are found in RsAgo, its induction leads to plasmid degradation and suppression of genes encoded on foreign plasmids, suggesting it may also interfere with transcription. Does not interact with preformed gRNA:tDNA duplexes. Mismatches and nt bulges are tolerated in the ternary complex, however, they significantly reduce the affinity of RsAgo:gRNA for tDNA. Mismatched tDNA can cause dissociation of gRNA from RsAgo. In situ binds 2 populations of RNA (15-19 and 45 nucleotides, nt) and a population of ssDNA 22-24 nt in length. The small sense RNA is probably derived from mRNA degradation and strongly enriched for U in the first and U/C in the second positions. The small DNA is enriched for sequences complementary to the RNA, with 3 nt overhangs on both ends; another nuclease may trim the ends. The sequences are largely derived from exogenous plasmids or genome-encoded foreign elements such as prophages and transposons. Forms a ternary complex with gRNA and double-stranded tDNA only when the tDNA is open. This chain is Protein argonaute, found in Cereibacter sphaeroides (strain ATCC 17025 / ATH 2.4.3) (Rhodobacter sphaeroides).